The chain runs to 234 residues: N-acetyl-alpha-D-glucosaminyl L-malate deacetylase 1 (234 aa).

The Zn(2+) site is built by H12, D15, and H113.

Belongs to the PIGL family. The cofactor is Zn(2+).

The enzyme catalyses (S)-malyl N-acetyl-alpha-D-glucosaminide + H2O = (S)-malyl alpha-D-glucosaminide + acetate. With respect to regulation, inhibited by BSH. Functionally, involved in bacillithiol (BSH) biosynthesis. Catalyzes the second step of the pathway, the deacetylation of N-acetylglucosaminylmalate (GlcNAc-Mal) to glucosamine malate (GlcN-Mal). The chain is N-acetyl-alpha-D-glucosaminyl L-malate deacetylase 1 from Bacillus anthracis.